A 513-amino-acid chain; its full sequence is Galactose-1-phosphate uridylyltransferase (513 aa).

It belongs to the galactose-1-phosphate uridylyltransferase type 2 family.

The protein localises to the cytoplasm. It catalyses the reaction alpha-D-galactose 1-phosphate + UDP-alpha-D-glucose = alpha-D-glucose 1-phosphate + UDP-alpha-D-galactose. It functions in the pathway carbohydrate metabolism; galactose metabolism. The sequence is that of Galactose-1-phosphate uridylyltransferase (galT) from Bacillus subtilis (strain 168).